Here is a 265-residue protein sequence, read N- to C-terminus: MIKWPWKVQESAHQTALPWQEALSIPLLTGLTEQEQSKLVTLAERFLQQKRLVPLQGFELDSLRSCRIALLFCLPVLELGLEWLDGFHEVLIYPAPFVVDDEWEDDIGLVHNQRIVQSGQSWQQGPIVLNWLDIQDSFDASGFNLIIHEVAHKLDTRNGDRASGVPFIPLREVAGWEHDLHAAMNNIQEEIELVGENAASIDAYAASDPAECFAVLSEYFFSAPELFAPRFPSLWQRFCQFYQQDPLQRLHRANDTDSFSATNVH.

Zn(2+) contacts are provided by H111, H148, H152, and E211.

Belongs to the MtfA family. Interacts with Mlc. It depends on Zn(2+) as a cofactor.

It localises to the cytoplasm. Involved in the modulation of the activity of the glucose-phosphotransferase system (glucose-PTS). Interacts with the transcriptional repressor Mlc, preventing its interaction with DNA and leading to the modulation of expression of genes regulated by Mlc, including ptsG, which encodes the PTS system glucose-specific EIICB component. Functionally, shows zinc-dependent metallopeptidase activity. This Escherichia coli (strain ATCC 8739 / DSM 1576 / NBRC 3972 / NCIMB 8545 / WDCM 00012 / Crooks) protein is Mlc titration factor A.